Here is a 720-residue protein sequence, read N- to C-terminus: F-box/LRR-repeat MAX2 homolog (720 aa).

The F-box domain occupies 14 to 60; the sequence is SSAILDLPEPLLLHILSFLTDVRSRHRAALACGRMRAAERATRSELS. LRR repeat units follow at residues 71-134, 135-158, 159-189, 190-218, 219-247, 248-279, 280-316, 317-344, 345-372, 373-398, 399-435, 436-452, 453-510, 511-537, 538-571, 572-606, 607-644, and 645-720; these read LFLS…QNAF, IAARLAGCFPAVTSLAVYCRDPTT, LANLTPHWQASLRRVKLVRWHQRPPTLPDGA, DLEPLLETCAALRELDLSEFYCWTEDVVR, ALTTHPSATAALTHLDLGLAAATDGFKSS, ELGPIAASCPNLRKLVAPCLFNPRFSDCVGDD, ALLSLATSCPRLTVLRLSEPFEAAANIQREEAAITVA, GLVAFFAALPALEDFTMDLQHNVLEAAP, AMEALARRCPRIKFLTLGSFQGLCKASW, LHLDGVAVCGGLESLYMKNCQDLTDA, SLAAIGRGCRRLAKFGIHGCDLVTSAGIRRLAFTLRP, TLKEVTVLHCRLLHTAE, CLTA…KCRY, MEFDDLGSWEMLRSLSLWFSAGQLLSP, LISAGLDSCPVLEEISIKVEGDCRTCPRPAPRTI, FGLSDLAGFPVLAKMKLDLSEAVGYALTAPTGQMD, LSLWERFYLHGIESLQTLYELDYWPPQDKDVHHRSLTL, and PAVG…QIDD.

As to quaternary structure, associates to a SCF (SKP1-CUL1-F-box protein) E3 ubiquitin-protein ligase complex. Interacts with D14 in a strigolactone-dependent manner. Interacts with SKP1, SKP5 and SKP20. As to expression, expressed in leaves. Expressed in roots, culms, leaf blades, leaf sheaths, shoot bases and panicles.

The protein resides in the nucleus. Functionally, involved in strigolactone (SL) signaling. Required for responses to SLs and the establishment of arbuscular mycorrhiza symbiosis in rice. Strigolactone-dependent association of D3 with D14 and D53 (a repressor of SL signaling) triggers D53 ubiquitination and degradation. Controls tillering by suppressing axillary bud activity. Tiller is a specialized grain-bearing branch that is formed on the unelongated basal internode and grows independently of the mother stem (culm) by means of its own adventitious roots. The sequence is that of F-box/LRR-repeat MAX2 homolog from Oryza sativa subsp. japonica (Rice).